A 79-amino-acid polypeptide reads, in one-letter code: MGGISIWQLLIILVIVVLLFGTKRLKGIGTDLGGAIKGFKKAVSEEEKDADFEQKKQVEEKSAAEPVSTETQSDVKEKS.

The helical transmembrane segment at 1 to 21 (MGGISIWQLLIILVIVVLLFG) threads the bilayer. The interval 45-79 (EEEKDADFEQKKQVEEKSAAEPVSTETQSDVKEKS) is disordered. Residues 51-63 (DFEQKKQVEEKSA) are compositionally biased toward basic and acidic residues.

It belongs to the TatA/E family. As to quaternary structure, the Tat system comprises two distinct complexes: a TatABC complex, containing multiple copies of TatA, TatB and TatC subunits, and a separate TatA complex, containing only TatA subunits. Substrates initially bind to the TatABC complex, which probably triggers association of the separate TatA complex to form the active translocon.

Its subcellular location is the cell inner membrane. Its function is as follows. Part of the twin-arginine translocation (Tat) system that transports large folded proteins containing a characteristic twin-arginine motif in their signal peptide across membranes. TatA could form the protein-conducting channel of the Tat system. This is Sec-independent protein translocase protein TatA from Alteromonas mediterranea (strain DSM 17117 / CIP 110805 / LMG 28347 / Deep ecotype).